The chain runs to 152 residues: MHTLSNLLSSIKNAQKAQKRVLYFSSFKKISKRKKRFVCSACKMMPRVFVSRLCWDFCRILYNEGYIHGFSQEADGSLRIVLKYHSSGIGVIKKMKTISKPGFRIYSSKNRLSKKREGLGITILSTSKGNLICDREAQKTNFGGGEILCQVF.

This sequence belongs to the universal ribosomal protein uS8 family.

The protein resides in the mitochondrion. In Marchantia polymorpha (Common liverwort), this protein is Small ribosomal subunit protein uS8m (RPS8).